Here is a 191-residue protein sequence, read N- to C-terminus: Protein GrpE (191 aa).

Residues M1–D15 are compositionally biased toward basic and acidic residues. The tract at residues M1–E35 is disordered.

Belongs to the GrpE family. In terms of assembly, homodimer.

The protein resides in the cytoplasm. Participates actively in the response to hyperosmotic and heat shock by preventing the aggregation of stress-denatured proteins, in association with DnaK and GrpE. It is the nucleotide exchange factor for DnaK and may function as a thermosensor. Unfolded proteins bind initially to DnaJ; upon interaction with the DnaJ-bound protein, DnaK hydrolyzes its bound ATP, resulting in the formation of a stable complex. GrpE releases ADP from DnaK; ATP binding to DnaK triggers the release of the substrate protein, thus completing the reaction cycle. Several rounds of ATP-dependent interactions between DnaJ, DnaK and GrpE are required for fully efficient folding. The polypeptide is Protein GrpE (Francisella philomiragia subsp. philomiragia (strain ATCC 25017 / CCUG 19701 / FSC 153 / O#319-036)).